We begin with the raw amino-acid sequence, 185 residues long: MDTSHYWSSRPLSELTGSEHHWLFLPGALTPRLKAMGDYSIEVVEQSHGPLNPEEAQALNVSPNTIGWVREVVMKLDGEACVTARSLTSVPALNGDWADLNGYGRRPLAEILYTSEQTLREPFQCALLPPGAPLAALSYRYAPQAERLLARRSRFTRNGSALLVSECFLPAFWARVEYAQALKSA.

Substrate-binding residues include R70, L108, and E166.

The protein belongs to the UbiC family.

The protein localises to the cytoplasm. The catalysed reaction is chorismate = 4-hydroxybenzoate + pyruvate. The protein operates within cofactor biosynthesis; ubiquinone biosynthesis. Its function is as follows. Removes the pyruvyl group from chorismate, with concomitant aromatization of the ring, to provide 4-hydroxybenzoate (4HB) for the ubiquinone pathway. The protein is Probable chorismate pyruvate-lyase 1 of Pseudomonas fluorescens (strain Pf0-1).